A 150-amino-acid chain; its full sequence is MKDEVALLATVTLLGVLLQAYFSLQVIRARRAHRVSPPLTTGPPEFERVYRAQVNCSEYFPLFLATLWVAGVYFHEGAAALCGLVYLFTRLRYFWGYARSAQLRLAPLYASARALWLLLALATLGLLAHFLPAAARAALLRLLRALLRTA.

Over 1-6 (MKDEVA) the chain is Cytoplasmic. The helical transmembrane segment at 7-27 (LLATVTLLGVLLQAYFSLQVI) threads the bilayer. The Lumenal portion of the chain corresponds to 28–48 (RARRAHRVSPPLTTGPPEFER). Residue arginine 30 participates in glutathione binding. The Proton donor role is filled by arginine 31. Phosphoserine is present on serine 36. The chain crosses the membrane as a helical span at residues 49–69 (VYRAQVNCSEYFPLFLATLWV). Glutathione-binding positions include 51–55 (RAQVN) and 58–59 (EY). At 70 to 73 (AGVY) the chain is on the cytoplasmic side. The helical transmembrane segment at 74–94 (FHEGAAALCGLVYLFTRLRYF) threads the bilayer. 93 to 97 (YFWGY) contributes to the glutathione binding site. Over 95 to 104 (WGYARSAQLR) the chain is Lumenal. Arginine 104 serves as the catalytic Proton acceptor. A helical transmembrane segment spans residues 105 to 124 (LAPLYASARALWLLLALATL). The Cytoplasmic segment spans residues 125 to 150 (GLLAHFLPAAARAALLRLLRALLRTA).

The protein belongs to the MAPEG family. Homotrimer. Interacts with ALOX5AP and ALOX5. Phosphorylation at Ser-36 by RPS6KB1 inhibits the leukotriene-C4 synthase activity.

The protein resides in the nucleus outer membrane. It is found in the endoplasmic reticulum membrane. It localises to the nucleus membrane. It carries out the reaction leukotriene C4 = leukotriene A4 + glutathione. The enzyme catalyses (13S,14S)-epoxy-(4Z,7Z,9E,11E,16Z,19Z)-docosahexaenoate + glutathione = (13R)-S-glutathionyl-(14S)-hydroxy-(4Z,7Z,9E,11E,16Z,19Z)-docosahexaenoate. It functions in the pathway lipid metabolism; leukotriene C4 biosynthesis. Inhibited by MK886. Catalyzes the conjugation of leukotriene A4 with reduced glutathione (GSH) to form leukotriene C4 with high specificity. Can also catalyze the transfer of a glutathionyl group from glutathione (GSH) to 13(S),14(S)-epoxy-docosahexaenoic acid to form maresin conjugate in tissue regeneration 1 (MCTR1), a bioactive lipid mediator that possess potent anti-inflammatory and proresolving actions. The chain is Leukotriene C4 synthase (LTC4S) from Cavia porcellus (Guinea pig).